A 360-amino-acid chain; its full sequence is Coiled-coil domain-containing protein 86 (360 aa).

A compositionally biased stretch (basic residues) spans 1-12 (MDTPLRRSRRLG). Disordered regions lie at residues 1–314 (MDTP…ENER) and 328–360 (LKRAKKKQLRSIEKRDTLALLQKQPPQRPAAKI). Residues serine 21, serine 24, serine 47, serine 50, and serine 58 each carry the phosphoserine modification. Threonine 65 carries the post-translational modification Phosphothreonine. 8 positions are modified to phosphoserine: serine 66, serine 69, serine 80, serine 91, serine 102, serine 110, serine 113, and serine 128. Polar residues predominate over residues 66-83 (SPGSPRLQQGSGLESPQG). Positions 153–164 (QLPPVPGSPEPY) are enriched in pro residues. Phosphoserine is present on residues serine 188, serine 217, and serine 218. Over residues 238 to 254 (GKPKSGRVWKDRSKKRF) the composition is skewed to basic residues. The stretch at 272-323 (KERQERKLAKDFARHLEEEKERRRQEKKQRRAENLKRRLENERKAEVVQVIR) forms a coiled coil. Composition is skewed to basic and acidic residues over residues 273–295 (ERQERKLAKDFARHLEEEKERRR) and 302–314 (RAENLKRRLENER). Position 342 is a citrulline (arginine 342).

Citrullinated by PADI4.

It is found in the nucleus. The protein localises to the chromosome. It localises to the nucleolus. In terms of biological role, required for proper chromosome segregation during mitosis and error-free mitotic progression. In Pongo abelii (Sumatran orangutan), this protein is Coiled-coil domain-containing protein 86.